The sequence spans 354 residues: UDP-N-acetylglucosamine--N-acetylmuramyl-(pentapeptide) pyrophosphoryl-undecaprenol N-acetylglucosamine transferase (354 aa).

UDP-N-acetyl-alpha-D-glucosamine contacts are provided by residues 11–13 (TAG), Arg164, Ser194, and Gln289.

The protein belongs to the glycosyltransferase 28 family. MurG subfamily.

It is found in the cell membrane. It carries out the reaction di-trans,octa-cis-undecaprenyl diphospho-N-acetyl-alpha-D-muramoyl-L-alanyl-D-glutamyl-meso-2,6-diaminopimeloyl-D-alanyl-D-alanine + UDP-N-acetyl-alpha-D-glucosamine = di-trans,octa-cis-undecaprenyl diphospho-[N-acetyl-alpha-D-glucosaminyl-(1-&gt;4)]-N-acetyl-alpha-D-muramoyl-L-alanyl-D-glutamyl-meso-2,6-diaminopimeloyl-D-alanyl-D-alanine + UDP + H(+). Its pathway is cell wall biogenesis; peptidoglycan biosynthesis. Its function is as follows. Cell wall formation. Catalyzes the transfer of a GlcNAc subunit on undecaprenyl-pyrophosphoryl-MurNAc-pentapeptide (lipid intermediate I) to form undecaprenyl-pyrophosphoryl-MurNAc-(pentapeptide)GlcNAc (lipid intermediate II). The chain is UDP-N-acetylglucosamine--N-acetylmuramyl-(pentapeptide) pyrophosphoryl-undecaprenol N-acetylglucosamine transferase from Clostridium botulinum (strain Kyoto / Type A2).